A 383-amino-acid chain; its full sequence is Chaperone protein DnaJ (383 aa).

Residues 6 to 70 enclose the J domain; it reads DYYDVLGVGR…QKRAAYDQYG (65 aa). The CR-type zinc finger occupies 140–222; that stretch reads GKETKISYSR…CHGTGREEER (83 aa). Positions 153, 156, 170, 173, 196, 199, 210, and 213 each coordinate Zn(2+). CXXCXGXG motif repeat units follow at residues 153–160, 170–177, 196–203, and 210–217; these read CHTCHGSG, CHKCHGAG, CDVCGGTG, and CDTCHGTG.

This sequence belongs to the DnaJ family. Homodimer. It depends on Zn(2+) as a cofactor.

It is found in the cytoplasm. Functionally, participates actively in the response to hyperosmotic and heat shock by preventing the aggregation of stress-denatured proteins and by disaggregating proteins, also in an autonomous, DnaK-independent fashion. Unfolded proteins bind initially to DnaJ; upon interaction with the DnaJ-bound protein, DnaK hydrolyzes its bound ATP, resulting in the formation of a stable complex. GrpE releases ADP from DnaK; ATP binding to DnaK triggers the release of the substrate protein, thus completing the reaction cycle. Several rounds of ATP-dependent interactions between DnaJ, DnaK and GrpE are required for fully efficient folding. Also involved, together with DnaK and GrpE, in the DNA replication of plasmids through activation of initiation proteins. The sequence is that of Chaperone protein DnaJ from Latilactobacillus sakei subsp. sakei (strain 23K) (Lactobacillus sakei subsp. sakei).